Reading from the N-terminus, the 224-residue chain is Endonuclease NucS (224 aa).

This sequence belongs to the NucS endonuclease family.

It localises to the cytoplasm. Functionally, cleaves both 3' and 5' ssDNA extremities of branched DNA structures. This Rhodococcus erythropolis (strain PR4 / NBRC 100887) protein is Endonuclease NucS.